The chain runs to 340 residues: Glycerol-3-phosphate dehydrogenase [NAD(P)+] (340 aa).

Positions 13, 14, and 108 each coordinate NADPH. Sn-glycerol 3-phosphate-binding residues include Lys108, Gly137, and Thr139. Ala141 lines the NADPH pocket. Sn-glycerol 3-phosphate-binding residues include Lys193, Asp246, Ser256, Arg257, and Asn258. The Proton acceptor role is filled by Lys193. Arg257 is a binding site for NADPH. Residues Ile281 and Glu283 each contribute to the NADPH site.

It belongs to the NAD-dependent glycerol-3-phosphate dehydrogenase family.

Its subcellular location is the cytoplasm. It catalyses the reaction sn-glycerol 3-phosphate + NAD(+) = dihydroxyacetone phosphate + NADH + H(+). It carries out the reaction sn-glycerol 3-phosphate + NADP(+) = dihydroxyacetone phosphate + NADPH + H(+). Its pathway is membrane lipid metabolism; glycerophospholipid metabolism. Functionally, catalyzes the reduction of the glycolytic intermediate dihydroxyacetone phosphate (DHAP) to sn-glycerol 3-phosphate (G3P), the key precursor for phospholipid synthesis. This is Glycerol-3-phosphate dehydrogenase [NAD(P)+] from Bartonella quintana (strain Toulouse) (Rochalimaea quintana).